A 382-amino-acid chain; its full sequence is Putative 12-oxophytodienoate reductase 3 (382 aa).

FMN-binding positions include 37-39 (PLT), alanine 70, and glutamine 112. The segment covering 120–138 (STNDQQPNGQAPISSTDKQ) has biased composition (polar residues). The disordered stretch occupies residues 120–147 (STNDQQPNGQAPISSTDKQITPDDSHTV). Substrate is bound at residue 184 to 187 (HGAH). The active-site Proton donor is the tyrosine 189. Arginine 236 contributes to the FMN binding site. Arginine 277 serves as a coordination point for substrate. FMN-binding positions include glycine 307 and 328–329 (GR).

Belongs to the NADH:flavin oxidoreductase/NADH oxidase family. FMN serves as cofactor.

Functionally, putative oxophytodienoate reductase that may be involved in the biosynthesis or metabolism of oxylipin signaling molecules. This Oryza sativa subsp. japonica (Rice) protein is Putative 12-oxophytodienoate reductase 3 (OPR3).